A 341-amino-acid polypeptide reads, in one-letter code: Annexin A1 isoform p35 (341 aa).

4 Annexin repeats span residues 37-108 (FDPS…ALLK), 109-180 (TPAQ…SLAK), 192-263 (ELAE…ALVK), and 267-338 (SKPA…ALCG).

The protein belongs to the annexin family. In terms of processing, in contrast to mammalian homologs, does not contain a tyrosine phosphorylation site in the N-terminal part.

Its subcellular location is the nucleus. It is found in the cytoplasm. It localises to the cell projection. The protein resides in the cilium. The protein localises to the basolateral cell membrane. In terms of biological role, calcium/phospholipid-binding protein which promotes membrane fusion and is involved in exocytosis. This protein regulates phospholipase A2 activity. It seems to bind from two to four calcium ions with high affinity. This chain is Annexin A1 isoform p35 (CP35), found in Columba livia (Rock dove).